We begin with the raw amino-acid sequence, 325 residues long: Siroheme decarboxylase NirDL subunit (325 aa).

The protein belongs to the Ahb/Nir family. In terms of assembly, forms a complex composed of NirDL, NirG and NirH. All proteins are required for the total conversion of siroheme to didecarboxysiroheme.

The enzyme catalyses siroheme + 2 H(+) = 12,18-didecarboxysiroheme + 2 CO2. The protein operates within porphyrin-containing compound metabolism. Functionally, involved in heme d1 biosynthesis. Catalyzes the decarboxylation of siroheme into didecarboxysiroheme. The sequence is that of Siroheme decarboxylase NirDL subunit from Paracoccus denitrificans (strain Pd 1222).